Reading from the N-terminus, the 78-residue chain is Large ribosomal subunit protein bL28 (78 aa).

The disordered stretch occupies residues 1–20; the sequence is MSRVCQVTGKRPVTGNNRSH.

Belongs to the bacterial ribosomal protein bL28 family.

The sequence is that of Large ribosomal subunit protein bL28 from Vibrio parahaemolyticus serotype O3:K6 (strain RIMD 2210633).